The sequence spans 821 residues: Tip elongation aberrant protein Tea4 (821 aa).

Composition is skewed to polar residues over residues 1-11 and 21-31; these read MLHMNSASSAD and DPTQQNDSTII. A disordered region spans residues 1–36; sequence MLHMNSASSADSMEIMESHFDPTQQNDSTIIESRYS. Tyr-35 is modified (phosphotyrosine). Ser-36 carries the post-translational modification Phosphoserine. The residue at position 40 (Tyr-40) is a Phosphotyrosine. The segment at 51 to 79 is disordered; it reads ISGENSEPQTVASQEISDSQEEDTTLTSS. Over residues 53 to 67 the composition is skewed to polar residues; the sequence is GENSEPQTVASQEIS. One can recognise an SH3 domain in the interval 130–191; the sequence is IDCNFVHAIR…PAEYIETPSE (62 aa). 5 disordered regions span residues 267–292, 333–352, 473–500, 529–570, and 664–697; these read LEIE…DHVT, SSTT…FSSA, DSFD…MPNN, SPRL…SSLL, and DASS…SFSS. The span at 268–282 shows a compositional bias: low complexity; that stretch reads EIEFSDSSDSSLSAE. Residues 283–292 show a composition bias toward basic and acidic residues; that stretch reads YRSESEDHVT. Polar residues-rich tracts occupy residues 333–350 and 473–484; these read SSTT…SKFS and DSFDTSNVTQDA. The tract at residues 527 to 821 is interaction with tea1; that stretch reads LLSPRLYSSS…EMASLLNTNR (295 aa). Over residues 529–541 the composition is skewed to low complexity; that stretch reads SPRLYSSSTPSSP. Positions 554–563 are enriched in basic and acidic residues; sequence ENRKQADKVE. The tract at residues 599–821 is interaction with win1; that stretch reads KAFSQSSIDL…EMASLLNTNR (223 aa). The span at 665–674 shows a compositional bias: low complexity; it reads ASSAIPSSSI. Residues 675-687 are compositionally biased toward basic and acidic residues; the sequence is SHDEDLLPRKNTE.

An essential component of the tea1 cell-end complex. Interacts with win1, tea1 and for3. Interacts with tip1 in the presence of tea1.

The protein resides in the cytoplasm. It is found in the cytoskeleton. Cell polarity factor essential for the bipolar localization and function of structures containing the cell-end marker tea1 during the normal cell cycle. Regulates cell polarity in complex with tea1 and together with the stress signaling MAPK cascade, contributes to cell polarity maintenance under stress conditions. Required for the localization of for3 at the cell tip specifically during initiation of bipolar growth. During the new end take off (NETO), formation of a protein complex that includes tea1, tea4 and for3 is necessary and sufficient for the establishment of cell polarity and localized actin assembly at new cell ends. In Schizosaccharomyces pombe (strain 972 / ATCC 24843) (Fission yeast), this protein is Tip elongation aberrant protein Tea4.